We begin with the raw amino-acid sequence, 33 residues long: Gastrin (33 aa).

Pyrrolidone carboxylic acid occurs at positions 1 and 18. At Tyr28 the chain carries Sulfotyrosine. Phe33 bears the Phenylalanine amide mark.

The protein belongs to the gastrin/cholecystokinin family.

It localises to the secreted. In terms of biological role, gastrin stimulates the stomach mucosa to produce and secrete hydrochloric acid and the pancreas to secrete its digestive enzymes. It also stimulates smooth muscle contraction and increases blood circulation and water secretion in the stomach and intestine. The chain is Gastrin (GAST) from Didelphis virginiana (North American opossum).